The following is a 156-amino-acid chain: 6,7-dimethyl-8-ribityllumazine synthase (156 aa).

5-amino-6-(D-ribitylamino)uracil-binding positions include Phe23, Ala57–Glu59, and Ala81–Ile83. Gly86–Thr87 is a binding site for (2S)-2-hydroxy-3-oxobutyl phosphate. His89 serves as the catalytic Proton donor. A 5-amino-6-(D-ribitylamino)uracil-binding site is contributed by Phe114. Arg128 contributes to the (2S)-2-hydroxy-3-oxobutyl phosphate binding site.

Belongs to the DMRL synthase family.

It catalyses the reaction (2S)-2-hydroxy-3-oxobutyl phosphate + 5-amino-6-(D-ribitylamino)uracil = 6,7-dimethyl-8-(1-D-ribityl)lumazine + phosphate + 2 H2O + H(+). The protein operates within cofactor biosynthesis; riboflavin biosynthesis; riboflavin from 2-hydroxy-3-oxobutyl phosphate and 5-amino-6-(D-ribitylamino)uracil: step 1/2. Catalyzes the formation of 6,7-dimethyl-8-ribityllumazine by condensation of 5-amino-6-(D-ribitylamino)uracil with 3,4-dihydroxy-2-butanone 4-phosphate. This is the penultimate step in the biosynthesis of riboflavin. This is 6,7-dimethyl-8-ribityllumazine synthase from Helicobacter pylori (strain G27).